A 322-amino-acid polypeptide reads, in one-letter code: Cysteine synthase (322 aa).

Positions 8 and 35 each coordinate hydrogen sulfide. Lys42 carries the N6-(pyridoxal phosphate)lysine modification. Residues Asn72 and Gly177 to Thr181 contribute to the pyridoxal 5'-phosphate site. Residue Leu269 coordinates hydrogen sulfide. Ser273 provides a ligand contact to pyridoxal 5'-phosphate.

Belongs to the cysteine synthase/cystathionine beta-synthase family. As to quaternary structure, homodimer. It depends on pyridoxal 5'-phosphate as a cofactor.

The catalysed reaction is O-acetyl-L-serine + hydrogen sulfide = L-cysteine + acetate. Its pathway is amino-acid biosynthesis; L-cysteine biosynthesis; L-cysteine from L-serine: step 2/2. The chain is Cysteine synthase (cysK) from Buchnera aphidicola subsp. Schizaphis graminum (strain Sg).